Reading from the N-terminus, the 161-residue chain is Large ribosomal subunit protein uL15 (161 aa).

A disordered region spans residues 1–42 (MKLSDIADNAGSRKKRMRVGRGIGSGKGKQSGRGGKGQTARS). Residues 21–37 (RGIGSGKGKQSGRGGKG) show a composition bias toward gly residues.

This sequence belongs to the universal ribosomal protein uL15 family. As to quaternary structure, part of the 50S ribosomal subunit.

Binds to the 23S rRNA. This chain is Large ribosomal subunit protein uL15, found in Bradyrhizobium diazoefficiens (strain JCM 10833 / BCRC 13528 / IAM 13628 / NBRC 14792 / USDA 110).